Consider the following 428-residue polypeptide: MNYLFKDGRYMNEEGKIVATDLLVQDGKIAKVAENITADNAEVIDVNGKLIAPGLVDVHVHLREPGGEHKETIETGTLAAAKGGFTTICAMPNTRPVPDCREHMEDLQNRIKEKAHVNVLPYGAITVRQAGSEMTDFETLKELGAFAFTDDGVGVQDASMMLAAMKRAAKLNMAVVAHCEENTLINKGCVHEGKFSEKHGLNGIPSVCESVHIARDILLAEAADCHYHVCHVSTKGSVRVIRDAKRAGIKVTAEVTPHHLVLCEDDIPSADPNFKMNPPLRGKEDHAALIEGLLDGTIDMIATDHAPHTAEEKAQGIERAPFGITGFETAFPLLYTNLVKKGIITLEQLIQFLTEKPADTFGLEAGRLKEGRTADITIIDLEQEEEIDPTTFLSKGKNTPFAGWKCQGWPVMTIVGGKIAWQKESALV.

2 residues coordinate Zn(2+): His-59 and His-61. Residues 61–63 (HLR) and Asn-93 contribute to the substrate site. Asp-151, His-178, and His-231 together coordinate Zn(2+). Residue Asn-277 coordinates substrate. Asp-304 provides a ligand contact to Zn(2+). Asp-304 is a catalytic residue. Substrate-binding positions include His-308 and 322–323 (FG).

This sequence belongs to the metallo-dependent hydrolases superfamily. DHOase family. Class I DHOase subfamily. Requires Zn(2+) as cofactor.

The enzyme catalyses (S)-dihydroorotate + H2O = N-carbamoyl-L-aspartate + H(+). It functions in the pathway pyrimidine metabolism; UMP biosynthesis via de novo pathway; (S)-dihydroorotate from bicarbonate: step 3/3. In terms of biological role, catalyzes the reversible cyclization of carbamoyl aspartate to dihydroorotate. This Bacillus cereus (strain AH187) protein is Dihydroorotase.